The primary structure comprises 178 residues: Hypoxanthine-guanine phosphoribosyltransferase (178 aa).

Positions 46 and 47 each coordinate diphosphate. Asp-103 is a Mg(2+) binding site. Asp-106 serves as the catalytic Proton acceptor. GMP contacts are provided by residues Lys-134, 155 to 156, and Asp-162; that span reads FL. Position 168 (Arg-168) interacts with diphosphate.

It belongs to the purine/pyrimidine phosphoribosyltransferase family. It depends on Mg(2+) as a cofactor.

The protein resides in the cytoplasm. The catalysed reaction is IMP + diphosphate = hypoxanthine + 5-phospho-alpha-D-ribose 1-diphosphate. It catalyses the reaction GMP + diphosphate = guanine + 5-phospho-alpha-D-ribose 1-diphosphate. Its pathway is purine metabolism; IMP biosynthesis via salvage pathway; IMP from hypoxanthine: step 1/1. It participates in purine metabolism; GMP biosynthesis via salvage pathway; GMP from guanine: step 1/1. Functionally, purine salvage pathway enzyme that catalyzes the transfer of the ribosyl-5-phosphate group from 5-phospho-alpha-D-ribose 1-diphosphate (PRPP) to the N9 position of the 6-oxopurines hypoxanthine and guanine to form the corresponding ribonucleotides IMP (inosine 5'-monophosphate) and GMP (guanosine 5'-monophosphate), with the release of PPi. The protein is Hypoxanthine-guanine phosphoribosyltransferase (hpt) of Aquifex aeolicus (strain VF5).